A 136-amino-acid chain; its full sequence is MARTKQTARKSTGGKAPRKQLASKAARKSAPSTGGVKKPHRYKPGTVALREIRRYQKSTELLIRKLPFQRLVREIAQDFKSDLRFQSSAIGALQESVEAYLVSLFEDTNLCAIHAKRVTIQSKDIQLARRLRGERG.

Residues 1–43 (MARTKQTARKSTGGKAPRKQLASKAARKSAPSTGGVKKPHRYK) are disordered. N6,N6,N6-trimethyllysine; alternate is present on K5. The residue at position 5 (K5) is an N6,N6-dimethyllysine; alternate. N6-methyllysine; alternate occurs at positions 5 and 10. At K10 the chain carries N6-acetyllysine; alternate. Residue S11 is modified to Phosphoserine. K15 carries the N6,N6-dimethyllysine; alternate modification. An N6-acetyllysine; alternate mark is found at K15, K19, K24, K28, and K37. N6-methyllysine; alternate is present on residues K19, K24, K28, and K37. Residues K28 and K37 each carry the N6,N6,N6-trimethyllysine; alternate modification. Residues K28 and K37 each carry the N6,N6-dimethyllysine; alternate modification. N6-acetyllysine is present on residues K57 and K65. Residue K80 is modified to N6,N6,N6-trimethyllysine; alternate. The residue at position 80 (K80) is an N6,N6-dimethyllysine; alternate. K80 carries the N6-methyllysine; alternate modification.

It belongs to the histone H3 family. In terms of assembly, the nucleosome is a histone octamer containing two molecules each of H2A, H2B, H3 and H4 assembled in one H3-H4 heterotetramer and two H2A-H2B heterodimers. The octamer wraps approximately 147 bp of DNA. Phosphorylated to form H3S10ph. H3S10ph promotes subsequent H3K14ac formation and is required for transcriptional activation through TBP recruitment to the promoters. Post-translationally, mono-, di- and trimethylated by the COMPASS complex to form H3K4me1/2/3. H3K4me activates gene expression by regulating transcription elongation and plays a role in telomere length maintenance. H3K4me enrichment correlates with transcription levels, and occurs in a 5' to 3' gradient with H3K4me3 enrichment at the 5'-end of genes, shifting to H3K4me2 and then H3K4me1. Methylated by SET2 to form H3K36me. H3K36me represses gene expression. Methylated by DOT1 to form H3K79me. H3K79me is required for association of SIR proteins with telomeric regions and for telomeric silencing. The COMPASS-mediated formation of H3K4me2/3 and the DOT1-mediated formation of H3K79me require H2BK123ub1. In terms of processing, acetylation of histone H3 leads to transcriptional activation. H3K14ac formation by GCN5 is promoted by H3S10ph. H3K14ac can also be formed by ESA1. H3K56ac formation occurs predominantly in newly synthesized H3 molecules during G1, S and G2/M of the cell cycle and may be involved in DNA repair.

The protein localises to the nucleus. The protein resides in the chromosome. In terms of biological role, core component of nucleosome. Nucleosomes wrap and compact DNA into chromatin, limiting DNA accessibility to the cellular machineries which require DNA as a template. Histones thereby play a central role in transcription regulation, DNA repair, DNA replication and chromosomal stability. DNA accessibility is regulated via a complex set of post-translational modifications of histones, also called histone code, and nucleosome remodeling. The protein is Histone H3 (HHT1) of Phaeosphaeria nodorum (strain SN15 / ATCC MYA-4574 / FGSC 10173) (Glume blotch fungus).